Consider the following 247-residue polypeptide: Mannose-P-dolichol utilization defect 1 protein (247 aa).

Ala-2 carries the post-translational modification N-acetylalanine. The next 7 membrane-spanning stretches (helical) occupy residues 37–57, 74–94, 100–120, 128–145, 151–171, 185–205, and 213–233; these read CLKILLSKGLGLGIVAGSLLV, LSLQSVMLELVALTGTVVYSI, FSSWGEALFLTLQTVAICFLV, VKGVAFLACYAMVLLALL, LAVVTLLQASNVPAVVVGKLL, LSAITVFMLFGGSLARIFTSV, and MAGVFVVSSLCNGLIAAQVLF. The PQ-loop 1 domain occupies 39–105; it reads KILLSKGLGL…NNFPFSSWGE (67 aa). The region spanning 159–216 is the PQ-loop 2 domain; sequence ASNVPAVVVGKLLQAATNYRNGHTGQLSAITVFMLFGGSLARIFTSVQETGDPLMAGV.

Belongs to the MPDU1 (TC 2.A.43.3) family.

It localises to the membrane. Functionally, required for normal utilization of mannose-dolichol phosphate (Dol-P-Man) in the synthesis of N-linked and O-linked oligosaccharides and GPI anchors. The protein is Mannose-P-dolichol utilization defect 1 protein (Mpdu1) of Mus musculus (Mouse).